The following is a 186-amino-acid chain: Elongation factor P (186 aa).

Belongs to the elongation factor P family.

The protein resides in the cytoplasm. Its pathway is protein biosynthesis; polypeptide chain elongation. Its function is as follows. Involved in peptide bond synthesis. Stimulates efficient translation and peptide-bond synthesis on native or reconstituted 70S ribosomes in vitro. Probably functions indirectly by altering the affinity of the ribosome for aminoacyl-tRNA, thus increasing their reactivity as acceptors for peptidyl transferase. This Synechococcus sp. (strain RCC307) protein is Elongation factor P.